Reading from the N-terminus, the 179-residue chain is Cellular nucleic acid-binding protein homolog (179 aa).

7 CCHC-type zinc fingers span residues 17-34 (PRCY…ECTK), 36-53 (SICY…ECTE), 58-75 (KTCY…DCPS), 83-100 (AECY…DCRT), 116-133 (MNCY…DCTM), 135-152 (VKCY…ECQQ), and 157-174 (QLCY…NCTS).

To human CNBP and to retroviral nucleic acid binding proteins (NBP). Post-translationally, phosphorylated.

It localises to the nucleus. Its function is as follows. Acts in the sexual differentiation pathway. Is required for efficient conjugation. Double-stranded DNA-binding protein. The chain is Cellular nucleic acid-binding protein homolog (byr3) from Schizosaccharomyces pombe (strain 972 / ATCC 24843) (Fission yeast).